A 515-amino-acid polypeptide reads, in one-letter code: MSMIAAFYGGKSILITGATGFMGKVLMEKLFRTSPDLKVVYILVRPKQGQTLQQRVFQILDSKLFEKVKEVCPNVHEKIRAISADLNQNDFAISKEDMKELLSHTNIIFHCAATVRFDDHLRHAVQLNVTATQQLLLMASQMPKLEAFIHISTAFSNCNLKHIDEVVYPCPVEPKKIIDSMEWLDDAIIDEITPKLIGDWPNTYTYTKALGEVVVQQEGGNLNIAIIRPSIMGATWQEPFPGWVDNLNGPSGLIIAAGKGFLRSIRATPMAVADLIPADTVVNLTLAVGWYTAVHRPKSTLVYHCTSGNLNPCNWGKMGLQVLATFEKIPFERAFRRPNADFTTNNITTHYWNAVSHRAPAIIYDFYLRLTGRKPRMTKLMNRLLRTLSMLEYFVNRSWEWSTYNTEMLMSELSPEDQRVFNFDVRQLNWLEYIENYVLGVKKYLLKEDMAGIPEAKQHLKRLRNIHYLFNTALFLIAWRLLIARSQVARNVWFFIVSFCYKFLSYFRASSTLNV.

Residues 1 to 465 are Cytoplasmic-facing; the sequence is MSMIAAFYGG…AKQHLKRLRN (465 aa). Residues 466-484 traverse the membrane as a helical segment; that stretch reads IHYLFNTALFLIAWRLLIA. Residues 485–515 lie on the Peroxisomal side of the membrane; the sequence is RSQVARNVWFFIVSFCYKFLSYFRASSTLNV.

This sequence belongs to the fatty acyl-CoA reductase family.

It localises to the peroxisome membrane. The catalysed reaction is a long-chain fatty acyl-CoA + 2 NADPH + 2 H(+) = a long-chain primary fatty alcohol + 2 NADP(+) + CoA. It carries out the reaction hexadecanoyl-CoA + 2 NADPH + 2 H(+) = hexadecan-1-ol + 2 NADP(+) + CoA. The enzyme catalyses octadecanoyl-CoA + 2 NADPH + 2 H(+) = octadecan-1-ol + 2 NADP(+) + CoA. It catalyses the reaction a very long-chain fatty acyl-CoA + 2 NADPH + 2 H(+) = a very long-chain primary fatty alcohol + 2 NADP(+) + CoA. The catalysed reaction is an ultra-long-chain fatty acyl-CoA + 2 NADPH + 2 H(+) = an ultra long-chain primary fatty alcohol + 2 NADP(+) + CoA. It carries out the reaction eicosanoyl-CoA + 2 NADPH + 2 H(+) = eicosan-1-ol + 2 NADP(+) + CoA. The enzyme catalyses docosanoyl-CoA + 2 NADPH + 2 H(+) = docosan-1-ol + 2 NADP(+) + CoA. It catalyses the reaction tetracosanoyl-CoA + 2 NADPH + 2 H(+) = tetracosan-1-ol + 2 NADP(+) + CoA. The catalysed reaction is hexacosanoyl-CoA + 2 NADPH + 2 H(+) = hexacosan-1-ol + 2 NADP(+) + CoA. It carries out the reaction octacosanoyl-CoA + 2 NADPH + 2 H(+) = octacosan-1-ol + 2 NADP(+) + CoA. The enzyme catalyses triacontanoyl-CoA + 2 NADPH + 2 H(+) = triacontan-1-ol + 2 NADP(+) + CoA. It catalyses the reaction 18-methylnonadecanoyl-CoA + 2 NADPH + 2 H(+) = 18-methylnonadecan-1-ol + 2 NADP(+) + CoA. The catalysed reaction is 20-methylheneicosanoyl-CoA + 2 NADPH + 2 H(+) = 20-methylheneicosan-1-ol + 2 NADP(+) + CoA. It carries out the reaction 22-methyltricosanoyl-CoA + 2 NADPH + 2 H(+) = 22-methyltricosan-1-ol + 2 NADP(+) + CoA. The enzyme catalyses 24-methylpentacosanoyl-CoA + 2 NADPH + 2 H(+) = 24-methylpentacosan-1-ol + 2 NADP(+) + CoA. Functionally, catalyzes the reduction of saturated but not unsaturated C16 or C18 fatty acyl-CoA to fatty alcohols (FAls). A lower activity can be observed with shorter fatty acyl-CoA substrates. Can produce very long-chain and ultra long-chain FAls, regardless of whether they have a straight or branched chain. Involved in the production of ether lipids/plasmalogens and wax monoesters whose synthesis requires FAls as substrates. This chain is Fatty acyl-CoA reductase 2, found in Bos taurus (Bovine).